We begin with the raw amino-acid sequence, 585 residues long: Amyloid protein-binding protein 2 (585 aa).

TPR repeat units lie at residues 50-83 (QGRLCQLGSEFCELEVFAKVLRALDKRHLLHHCF), 120-153 (IQVGFVLGGFLSDAGWYSDAEKVFLSCLQLCTLH), 206-239 (AALYGELCALLFAKSHYDEAYKWCIEAMKEITAG), 288-321 (SDTLLDYGFYLLNVDNICQSVAIYQAALDIRQSV), 333-367 (HEDLAYSSYVHQYSSGKFDNALFHAERAIGIITHI), 429-462 (AKHYGNLGRLYQSMRKFKEAEEMHIKAIQIKEQL), 471-505 (ALSVGHLASLYNYDMNQYENAEKLYLRSIAIGKKL), and 514-547 (EYDYRGLIKLYNSIGNYEKVFEYHNVLSNWNRLR).

As to quaternary structure, component of a CRL2 E3 ubiquitin-protein ligase complex, also named ECS (Elongin BC-CUL2/5-SOCS-box protein) complex, composed of CUL2, Elongin BC (ELOB and ELOC), RBX1 and substrate-specific adapter APPBP2. Interacts with APP; APP interaction inhibits the E3 ubiquitin-protein ligase activity of the CRL2(APPBP2) complex. In terms of processing, rapidly degraded by the proteasome upon overexpression of a C-terminal fragment of APP.

It is found in the nucleus. The protein localises to the cytoplasm. The protein resides in the cytoskeleton. Its subcellular location is the membrane. It participates in protein modification; protein ubiquitination. E3 ubiquitin-protein ligase activity of the CRL2(APPBP2) complex is inhibited by APP. Its function is as follows. Substrate-recognition component of a Cul2-RING (CRL2) E3 ubiquitin-protein ligase complex of the DesCEND (destruction via C-end degrons) pathway, which recognizes a C-degron located at the extreme C terminus of target proteins, leading to their ubiquitination and degradation. The C-degron recognized by the DesCEND pathway is usually a motif of less than ten residues and can be present in full-length proteins, truncated proteins or proteolytically cleaved forms. The CRL2(APPBP2) complex specifically recognizes proteins with a -Arg-Xaa-Xaa-Gly degron at the C-terminus, leading to their ubiquitination and degradation. The CRL2(APPBP2) complex mediates ubiquitination and degradation of truncated SELENOV selenoproteins produced by failed UGA/Sec decoding, which end with a -Arg-Xaa-Xaa-Gly degron. May play a role in intracellular protein transport: may be involved in the translocation of APP along microtubules toward the cell surface. The protein is Amyloid protein-binding protein 2 of Homo sapiens (Human).